The primary structure comprises 218 residues: Putative glutamine transport system permease protein GlnP (218 aa).

The ABC transmembrane type-1 domain maps to 19–208 (TLVTLKYSVI…ILVMLISFIA (190 aa)). 4 helical membrane passes run 25–45 (YSVI…ICKV), 57–79 (FYTS…FASP), 86–108 (FSVF…SEVI), and 187–207 (FFPM…ISFI).

Belongs to the binding-protein-dependent transport system permease family. HisMQ subfamily.

It localises to the cell inner membrane. In terms of biological role, part of the binding-protein-dependent transport system for glutamine; probably responsible for the translocation of the substrate across the membrane. In Rickettsia felis (strain ATCC VR-1525 / URRWXCal2) (Rickettsia azadi), this protein is Putative glutamine transport system permease protein GlnP (glnP).